Consider the following 401-residue polypeptide: MSALQAVVTLLLCGQLLAVETGSEATADSCPKAPEIANSHVEYSVRYQCDKYYKLHAGNGVYTFNNKQWINKDIGQQLPECEEDDSCPEPPKIENGYVEYLVRYQCKPYYTLRTCGDGVYTFNSKKQWINKNIGQKLPECEAVCGKPKHPVDQVQRIIGGSLDAKGSFPWQAKMVSQHNLISGATLINERWLLTTAKNLYLGHSSDKKAKDITPTLRLYVGKNQLVEVEKVVLHPDHSKVDIGLIKLRQKVPVNDKVMPICLPSKDYVKVGRVGYVSGWGRNENFNFTEHLKYVMLPVADQDKCVKHYEGVDAPKNKTAKSPVGVQPILNENTFCVGLSKYQDDTCYGDAGSAFVVHDKEDDTWYAAGILSFDKSCAVAEYGVYVKVTSILDWVRKTIANN.

Residues 1–18 (MSALQAVVTLLLCGQLLA) form the signal peptide. Sushi domains lie at 28–83 (DSCP…ECEE) and 85–142 (DSCP…ECEA). Intrachain disulfides connect Cys49–Cys81, Cys106–Cys140, and Cys144–Cys261. The region spanning 157–399 (IIGGSLDAKG…ILDWVRKTIA (243 aa)) is the Peptidase S1 domain. N-linked (GlcNAc...) asparagine glycosylation is found at Asn286 and Asn316. Disulfide bonds link Cys304–Cys335 and Cys346–Cys376. The interaction with CD163 stretch occupies residues 313-318 (APKNKT).

This sequence belongs to the peptidase S1 family. As to quaternary structure, tetramer of two alpha and two beta chains; disulfide-linked. The hemoglobin/haptoglobin complex is composed of a haptoglobin dimer bound to two hemoglobin alpha-beta dimers. Interacts with CD163. Interacts with ERGIC3. As to expression, expressed by the liver and secreted in plasma.

It localises to the secreted. Its subcellular location is the extracellular space. As a result of hemolysis, hemoglobin is found to accumulate in the kidney and is secreted in the urine. Haptoglobin captures, and combines with free plasma hemoglobin to allow hepatic recycling of heme iron and to prevent kidney damage. Haptoglobin also acts as an antioxidant, has antibacterial activity and plays a role in modulating many aspects of the acute phase response. Hemoglobin/haptoglobin complexes are rapidly cleared by the macrophage CD163 scavenger receptor expressed on the surface of liver Kupfer cells through an endocytic lysosomal degradation pathway. This Bos taurus (Bovine) protein is Haptoglobin (HP).